Reading from the N-terminus, the 125-residue chain is Small ribosomal subunit protein bS6 (125 aa).

Residues 96–125 (VTAPSPMMREEKAKSAPQPAEEAKETTLAT) form a disordered region. Residues 116–125 (EEAKETTLAT) show a composition bias toward basic and acidic residues.

Belongs to the bacterial ribosomal protein bS6 family.

Functionally, binds together with bS18 to 16S ribosomal RNA. The polypeptide is Small ribosomal subunit protein bS6 (Nitrosospira multiformis (strain ATCC 25196 / NCIMB 11849 / C 71)).